We begin with the raw amino-acid sequence, 219 residues long: uncharacterized protein (219 aa).

Topologically, residues 1 to 15 are cytoplasmic; it reads MLKLTTTSVTFHVLR. The helical transmembrane segment at 16-36 threads the bilayer; it reads YFQLGLSVTNLLLASFAIITN. Over 37–41 the chain is Vacuolar; sequence YKVDR. The chain crosses the membrane as a helical span at residues 42-62; that stretch reads ILRLSLAVSIISSVYFGIVRF. Residue Leu63 is a topological domain, cytoplasmic. A helical transmembrane segment spans residues 64–84; that stretch reads PVLLIFVMEIVQTVLWFTAFV. The Vacuolar segment spans residues 85–116; that stretch reads TLASKFGSMSCSSMPRGINFDYSGSCKIAKID. Residues 117-137 form a helical membrane-spanning segment; it reads ILPEAVLFILFLATTYASYIT. The Cytoplasmic segment spans residues 138–219; sequence VLSQAKENGS…VIDGSIEHSS (82 aa). The segment at 176–219 is disordered; that stretch reads PLLDLEVQEDARTETESIEDSTDSEDNANIEQEKVIDGSIEHSS. Positions 191-203 are enriched in acidic residues; sequence ESIEDSTDSEDNA. A compositionally biased stretch (basic and acidic residues) spans 206–219; the sequence is EQEKVIDGSIEHSS.

The protein resides in the vacuole membrane. This is an uncharacterized protein from Saccharomyces cerevisiae (strain ATCC 204508 / S288c) (Baker's yeast).